We begin with the raw amino-acid sequence, 480 residues long: Sensor histidine kinase CusS (480 aa).

Topologically, residues 1-15 (MVSKPFQRPFSLATR) are cytoplasmic. A helical transmembrane segment spans residues 16–36 (LTFFISLATIAAFFAFAWIMI). Over 37-186 (HSVKVHFAEQ…LHYINDLMNK (150 aa)) the chain is Periplasmic. Residues 187–207 (LIMTASVISILIVFIVLLAVH) traverse the membrane as a helical segment. The 53-residue stretch at 208 to 260 (KGHAPIRSVSRQIQNITSKDLDVRLDPQTVPIELEQLVLSFNHMIERIEDVFT) folds into the HAMP domain. Residues 208–480 (KGHAPIRSVS…GTRFVITLPA (273 aa)) lie on the Cytoplasmic side of the membrane. The region spanning 268 to 480 (DIAHEIRTPI…GTRFVITLPA (213 aa)) is the Histidine kinase domain. Position 271 is a phosphohistidine; by autocatalysis (His-271).

Post-translationally, autophosphorylated.

It localises to the cell inner membrane. The enzyme catalyses ATP + protein L-histidine = ADP + protein N-phospho-L-histidine.. Functionally, member of the two-component regulatory system CusS/CusR involved in response to copper and silver. Acts as a copper/silver ion sensor. Activates CusR by phosphorylation. In Escherichia coli (strain K12), this protein is Sensor histidine kinase CusS (cusS).